The following is a 293-amino-acid chain: N-acetylmannosamine kinase (293 aa).

ATP is bound by residues 5–12 (AIDIGGTK) and 133–140 (GVGGGLVI). The Zn(2+) site is built by H157, C167, C169, and C174.

The protein belongs to the ROK (NagC/XylR) family. NanK subfamily. As to quaternary structure, homodimer.

The catalysed reaction is an N-acyl-D-mannosamine + ATP = an N-acyl-D-mannosamine 6-phosphate + ADP + H(+). Its pathway is amino-sugar metabolism; N-acetylneuraminate degradation; D-fructose 6-phosphate from N-acetylneuraminate: step 2/5. Catalyzes the phosphorylation of N-acetylmannosamine (ManNAc) to ManNAc-6-P. This is N-acetylmannosamine kinase from Vibrio vulnificus (strain CMCP6).